Reading from the N-terminus, the 232-residue chain is Putative homeobox protein NANOG2 (232 aa).

The disordered stretch occupies residues 1 to 39 (MDLPIQDSHDSSTSPKGKQPTTAEKSATKKEDKVPVKKQ). Polar residues predominate over residues 11–25 (SSTSPKGKQPTTAEK). Over residues 26–35 (SATKKEDKVP) the composition is skewed to basic and acidic residues. Tandem repeats lie at residues 123-127 (WSNQT), 128-132 (WNNST), 133-137 (WSNQT), 143-147 (WSNHS), 148-152 (WNTQT), 153-157 (WCTQS), 158-162 (WNNQA), and 163-167 (WNSPF). An 8 X repeats starting with a Trp in each unit region spans residues 123–167 (WSNQTWNNSTWSNQTQNIQSWSNHSWNTQTWCTQSWNNQAWNSPF). A sufficient for transactivation activity region spans residues 123–167 (WSNQTWNNSTWSNQTQNIQSWSNHSWNTQTWCTQSWNNQAWNSPF). The interval 168-232 (YNCGEESLQS…YSTNMXXEDV (65 aa)) is sufficient for strong transactivation activity.

Belongs to the Nanog homeobox family.

It localises to the nucleus. Functionally, probable transcriptional regulator. In Pan paniscus (Pygmy chimpanzee), this protein is Putative homeobox protein NANOG2 (NANOGP1).